We begin with the raw amino-acid sequence, 311 residues long: HTH-type transcriptional regulator DsdC (311 aa).

Residues 15-72 (WQLSKMHTFEVAARHQSFALAAEELSLSPSAVSHRINQLEEELGIQLFVRSHRKVELT) enclose the HTH lysR-type domain. The H-T-H motif DNA-binding region spans 32–51 (FALAAEELSLSPSAVSHRIN).

This sequence belongs to the LysR transcriptional regulatory family.

Regulates the expression of the dsdX-dsdA operon. The protein is HTH-type transcriptional regulator DsdC of Escherichia coli (strain K12).